The sequence spans 61 residues: Small ribosomal subunit protein uS14 (61 aa).

4 residues coordinate Zn(2+): cysteine 24, cysteine 27, cysteine 40, and cysteine 43.

The protein belongs to the universal ribosomal protein uS14 family. Zinc-binding uS14 subfamily. As to quaternary structure, part of the 30S ribosomal subunit. Contacts proteins S3 and S10. It depends on Zn(2+) as a cofactor.

Functionally, binds 16S rRNA, required for the assembly of 30S particles and may also be responsible for determining the conformation of the 16S rRNA at the A site. The chain is Small ribosomal subunit protein uS14 from Desulfovibrio desulfuricans (strain ATCC 27774 / DSM 6949 / MB).